We begin with the raw amino-acid sequence, 75 residues long: Protein BsdD (75 aa).

Its function is as follows. Involved in the non-oxidative decarboxylation and detoxification of phenolic derivatives under both aerobic and anaerobic conditions, however the precise biochemical function of BsdD in metabolism of phenolic acid is unknown. The polypeptide is Protein BsdD (Bacillus subtilis (strain 168)).